The following is a 153-amino-acid chain: Hsp90 co-chaperone HCH1 (153 aa).

It belongs to the AHA1 family. As to quaternary structure, monomer. Interacts with HSP82.

Its subcellular location is the cytoplasm. The protein localises to the nucleus. Co-chaperone that binds to the molecular chaperone HSP82 and stimulates its ATPase activity. Although not essential, it confers thermotolerance when intracellular levels of HSP82 are limiting. This chain is Hsp90 co-chaperone HCH1 (HCH1), found in Saccharomyces cerevisiae (strain ATCC 204508 / S288c) (Baker's yeast).